The chain runs to 494 residues: Anthranilate synthase component 1 (494 aa).

L-tryptophan-binding positions include S52 and 274–276 (PYM). A chorismate-binding site is contributed by 309–310 (GT). Position 336 (E336) interacts with Mg(2+). Chorismate is bound by residues Y424, R444, 458–460 (GAG), and G460. E473 serves as a coordination point for Mg(2+).

The protein belongs to the anthranilate synthase component I family. Heterotetramer consisting of two non-identical subunits: a beta subunit (TrpG) and a large alpha subunit (TrpE). The cofactor is Mg(2+).

The catalysed reaction is chorismate + L-glutamine = anthranilate + pyruvate + L-glutamate + H(+). It functions in the pathway amino-acid biosynthesis; L-tryptophan biosynthesis; L-tryptophan from chorismate: step 1/5. Its activity is regulated as follows. Feedback inhibited by tryptophan. Functionally, part of a heterotetrameric complex that catalyzes the two-step biosynthesis of anthranilate, an intermediate in the biosynthesis of L-tryptophan. In the first step, the glutamine-binding beta subunit (TrpG) of anthranilate synthase (AS) provides the glutamine amidotransferase activity which generates ammonia as a substrate that, along with chorismate, is used in the second step, catalyzed by the large alpha subunit of AS (TrpE) to produce anthranilate. In the absence of TrpG, TrpE can synthesize anthranilate directly from chorismate and high concentrations of ammonia. The polypeptide is Anthranilate synthase component 1 (trpE) (Aquifex aeolicus (strain VF5)).